The chain runs to 156 residues: ATP synthase subunit b (156 aa).

The helical transmembrane segment at 7–29 threads the bilayer; the sequence is LFAQMVVFLVLAWFTMKFVWPPL.

The protein belongs to the ATPase B chain family. As to quaternary structure, F-type ATPases have 2 components, F(1) - the catalytic core - and F(0) - the membrane proton channel. F(1) has five subunits: alpha(3), beta(3), gamma(1), delta(1), epsilon(1). F(0) has three main subunits: a(1), b(2) and c(10-14). The alpha and beta chains form an alternating ring which encloses part of the gamma chain. F(1) is attached to F(0) by a central stalk formed by the gamma and epsilon chains, while a peripheral stalk is formed by the delta and b chains.

Its subcellular location is the cell inner membrane. In terms of biological role, f(1)F(0) ATP synthase produces ATP from ADP in the presence of a proton or sodium gradient. F-type ATPases consist of two structural domains, F(1) containing the extramembraneous catalytic core and F(0) containing the membrane proton channel, linked together by a central stalk and a peripheral stalk. During catalysis, ATP synthesis in the catalytic domain of F(1) is coupled via a rotary mechanism of the central stalk subunits to proton translocation. Component of the F(0) channel, it forms part of the peripheral stalk, linking F(1) to F(0). This is ATP synthase subunit b from Burkholderia multivorans (strain ATCC 17616 / 249).